The chain runs to 2434 residues: ATP-binding cassette sub-family A member 2 (2434 aa).

N-linked (GlcNAc...) asparagine glycosylation is present at asparagine 14. 2 consecutive transmembrane segments (helical) span residues 22–42 and 54–74; these read PWVL…LLGL and AFYT…QSLC. 3 N-linked (GlcNAc...) asparagine glycosylation sites follow: asparagine 89, asparagine 168, and asparagine 173. At glutamine 271 the chain carries N5-methylglutamine. Asparagine 305, asparagine 368, asparagine 379, asparagine 420, asparagine 432, asparagine 476, asparagine 484, asparagine 494, asparagine 530, asparagine 549, asparagine 590, asparagine 600, and asparagine 628 each carry an N-linked (GlcNAc...) asparagine glycan. Residues 354-369 are compositionally biased toward low complexity; it reads RAPAPQAGSPSGPANS. Residues 354–396 are disordered; it reads RAPAPQAGSPSGPANSTGVGANTGPNTTVEEGTQSPVTPASPD. A compositionally biased stretch (polar residues) spans 370-396; the sequence is TGVGANTGPNTTVEEGTQSPVTPASPD. Helical transmembrane passes span 699 to 719, 750 to 770, 782 to 802, 813 to 833, 857 to 877, and 893 to 913; these read FLFV…VYSV, VAWF…LTAI, VLII…FCFL, ASAC…YVAI, AFGL…GIQW, and LLAV…TWYI. Residues 990 to 1221 form the ABC transporter 1 domain; it reads VCVDKLTKVY…YGDGYRLTLV (232 aa). An ATP-binding site is contributed by 1024–1031; the sequence is GHNGAGKT. The interval 1225 to 1246 is disordered; sequence AEPGTSQEPGMASSPSGRPQLS. A compositionally biased stretch (polar residues) spans 1228 to 1246; it reads GTSQEPGMASSPSGRPQLS. Serine 1238 carries the phosphoserine modification. N-linked (GlcNAc...) asparagine glycosylation is present at asparagine 1247. Phosphoserine occurs at positions 1327 and 1331. Residues 1461 to 1481 form a helical membrane-spanning segment; it reads ILLPAFFVCVAMTVALSVPEI. Asparagine 1496, asparagine 1549, and asparagine 1557 each carry an N-linked (GlcNAc...) asparagine glycan. Residues 1587 to 1606 are disordered; sequence NFVPPPPSPAPSDSPLSPDE. The span at 1589–1598 shows a compositional bias: pro residues; it reads VPPPPSPAPS. Asparagine 1613, asparagine 1678, and asparagine 1776 each carry an N-linked (GlcNAc...) asparagine glycan. Transmembrane regions (helical) follow at residues 1793-1813, 1842-1862, 1873-1893, 1906-1926, and 1992-2012; these read VVIA…FVVF, VWDM…LFVF, FPAV…IMYP, VFLI…TFLL, and GLVA…MCQY. An ABC transporter 2 domain is found at 2051–2286; that stretch reads VKIENLTKVY…FGDGYMITVR (236 aa). Asparagine 2055 is a glycosylation site (N-linked (GlcNAc...) asparagine). ATP is bound at residue 2088–2095; that stretch reads GVNGAGKT. At threonine 2411 the chain carries Phosphothreonine.

The protein belongs to the ABC transporter superfamily. ABCA family. Post-translationally, N-glycosylated. Methylated at Gln-271 by N6AMT1. As to expression, expressed at high levels in brain, at moderate levels in heart, kidney and lung, and at low levels in skeletal muscle, stomach, spleen, colon and pancreas. Not detected in the liver or small intestine. In brain, highly expressed in white matter and detected in oligodendrocytes. Expressed in cerebellum as well as the anterior commissure. Expressed mainly in the white matter but is also scattered in gray matter throughout the whole brain. Expressed in myelinating cells of both ventral and dorsal restricted regions in newborn spinal cord. Expressed in non-myelin-forming as well as in myelin-forming Schwann cells in the sciatic nerve.

It localises to the endosome membrane. Its subcellular location is the lysosome membrane. Functionally, probable transporter, its natural substrate has not been found yet. May have a role in macrophage lipid metabolism and neural development. May play a role in myelination, perhaps as a transporter for certain kinds of myelin chemical components. May play an important role in gamma-secretase processing of APP and thus in amyloid-beta peptide generation. Regulates esterification of plasma membrane cholesterol by modulation of sphingolipid metabolism. Probable lipid transporter that modulates cholesterol sequestration in the late endosome/lysosome by regulating the intracellular sphingolipid metabolism, in turn participates in cholesterol homeostasis. May alter the transbilayer distribution of ceramide in the intraluminal membrane lipid bilayer, favoring its retention in the outer leaflet that results in increased acid ceramidase activity in the late endosome/lysosome, facilitating ceramide deacylation to sphingosine leading to the sequestration of free cholesterol in lysosomes. In addition regulates amyloid-beta production either by activating a signaling pathway that regulates amyloid precursor protein transcription through the modulation of sphingolipid metabolism or through its role in gamma-secretase processing of APP. May play a role in myelin formation. The sequence is that of ATP-binding cassette sub-family A member 2 from Rattus norvegicus (Rat).